The sequence spans 443 residues: Glucose-6-phosphate isomerase (443 aa).

The active-site Proton donor is E285. Residues H306 and K420 contribute to the active site.

This sequence belongs to the GPI family.

Its subcellular location is the cytoplasm. The enzyme catalyses alpha-D-glucose 6-phosphate = beta-D-fructose 6-phosphate. Its pathway is carbohydrate biosynthesis; gluconeogenesis. It participates in carbohydrate degradation; glycolysis; D-glyceraldehyde 3-phosphate and glycerone phosphate from D-glucose: step 2/4. Its function is as follows. Catalyzes the reversible isomerization of glucose-6-phosphate to fructose-6-phosphate. This chain is Glucose-6-phosphate isomerase, found in Staphylococcus aureus (strain Mu3 / ATCC 700698).